A 116-amino-acid chain; its full sequence is Non-specific lipid-transfer protein 1 (116 aa).

Positions 1 to 25 (MARAQLVLVALVAALLLAAPHAAVA) are cleaved as a signal peptide. Disulfide bonds link Cys28/Cys75, Cys38/Cys52, Cys53/Cys98, and Cys73/Cys112.

Belongs to the plant LTP family. In terms of tissue distribution, aleurone (external part) of the seeds.

Functionally, plant non-specific lipid-transfer proteins transfer phospholipids as well as galactolipids across membranes. May play a role in wax or cutin deposition in the cell walls of expanding epidermal cells and certain secretory tissues. The chain is Non-specific lipid-transfer protein 1 (LTP) from Oryza sativa subsp. indica (Rice).